Consider the following 231-residue polypeptide: Phosphatidylserine decarboxylase proenzyme (231 aa).

Catalysis depends on Ser-188, which acts as the Schiff-base intermediate with substrate; via pyruvic acid. Position 188 is a pyruvic acid (Ser); by autocatalysis (Ser-188).

Belongs to the phosphatidylserine decarboxylase family. PSD-A subfamily. In terms of assembly, heterodimer of a large membrane-associated beta subunit and a small pyruvoyl-containing alpha subunit. The cofactor is pyruvate. Is synthesized initially as an inactive proenzyme. Formation of the active enzyme involves a self-maturation process in which the active site pyruvoyl group is generated from an internal serine residue via an autocatalytic post-translational modification. Two non-identical subunits are generated from the proenzyme in this reaction, and the pyruvate is formed at the N-terminus of the alpha chain, which is derived from the carboxyl end of the proenzyme. The post-translation cleavage follows an unusual pathway, termed non-hydrolytic serinolysis, in which the side chain hydroxyl group of the serine supplies its oxygen atom to form the C-terminus of the beta chain, while the remainder of the serine residue undergoes an oxidative deamination to produce ammonia and the pyruvoyl prosthetic group on the alpha chain.

Its subcellular location is the cell membrane. The enzyme catalyses a 1,2-diacyl-sn-glycero-3-phospho-L-serine + H(+) = a 1,2-diacyl-sn-glycero-3-phosphoethanolamine + CO2. It functions in the pathway phospholipid metabolism; phosphatidylethanolamine biosynthesis; phosphatidylethanolamine from CDP-diacylglycerol: step 2/2. Its function is as follows. Catalyzes the formation of phosphatidylethanolamine (PtdEtn) from phosphatidylserine (PtdSer). The chain is Phosphatidylserine decarboxylase proenzyme from Rickettsia rickettsii (strain Iowa).